The sequence spans 234 residues: Phosphoglycolate phosphatase (234 aa).

The Nucleophile role is filled by Asp8. Mg(2+)-binding residues include Asp8 and Asp10. Lys157 is a substrate binding site. Asp180 and Asp184 together coordinate Mg(2+).

Belongs to the archaeal SPP-like hydrolase family. Requires Mg(2+) as cofactor.

The catalysed reaction is 2-phosphoglycolate + H2O = glycolate + phosphate. Its function is as follows. Catalyzes the dephosphorylation of 2-phosphoglycolate. The chain is Phosphoglycolate phosphatase from Methanoculleus marisnigri (strain ATCC 35101 / DSM 1498 / JR1).